The sequence spans 150 residues: Transcriptional regulator MraZ (150 aa).

2 SpoVT-AbrB domains span residues 5–52 (VTHL…PLPD) and 81–124 (AHDL…DAEA).

This sequence belongs to the MraZ family. As to quaternary structure, forms oligomers.

The protein resides in the cytoplasm. It is found in the nucleoid. The chain is Transcriptional regulator MraZ from Alkalilimnicola ehrlichii (strain ATCC BAA-1101 / DSM 17681 / MLHE-1).